Here is a 960-residue protein sequence, read N- to C-terminus: UPF0182 protein DSY1630 (960 aa).

Helical transmembrane passes span 7 to 27 (IMLV…GLFE), 50 to 70 (IIQI…LFSI), 105 to 125 (TLWL…VTGF), 169 to 189 (FGPL…AGVI), 212 to 232 (LALL…FDTF), 256 to 276 (ALKA…LAFF), and 285 to 305 (LPIL…PMVL). 2 disordered regions span residues 866–899 (SALA…QEDT) and 924–960 (TGDS…KTNP). Positions 881–897 (ETEETTEETEEPVDPQE) are enriched in acidic residues. The span at 931-944 (EGGKKADEDAHDVQ) shows a compositional bias: basic and acidic residues. A compositionally biased stretch (polar residues) spans 950 to 960 (SVSSEQSKTNP).

The protein belongs to the UPF0182 family.

Its subcellular location is the cell membrane. The polypeptide is UPF0182 protein DSY1630 (Desulfitobacterium hafniense (strain Y51)).